A 104-amino-acid chain; its full sequence is NADH-quinone oxidoreductase subunit K (104 aa).

3 helical membrane-spanning segments follow: residues 7 to 27 (PDMAMLLAAGLFALGLLGVLV), 31 to 51 (LLFMLMSIEIMLNAAALAFVA), and 63 to 83 (VMFLMILSLAAAEAAIGLAIL).

This sequence belongs to the complex I subunit 4L family. NDH-1 is composed of 14 different subunits. Subunits NuoA, H, J, K, L, M, N constitute the membrane sector of the complex.

It localises to the cell inner membrane. It catalyses the reaction a quinone + NADH + 5 H(+)(in) = a quinol + NAD(+) + 4 H(+)(out). Its function is as follows. NDH-1 shuttles electrons from NADH, via FMN and iron-sulfur (Fe-S) centers, to quinones in the respiratory chain. The immediate electron acceptor for the enzyme in this species is believed to be ubiquinone. Couples the redox reaction to proton translocation (for every two electrons transferred, four hydrogen ions are translocated across the cytoplasmic membrane), and thus conserves the redox energy in a proton gradient. This is NADH-quinone oxidoreductase subunit K from Gluconacetobacter diazotrophicus (strain ATCC 49037 / DSM 5601 / CCUG 37298 / CIP 103539 / LMG 7603 / PAl5).